The sequence spans 227 residues: Cytochrome c oxidase subunit 2 (227 aa).

Topologically, residues 1-14 are mitochondrial intermembrane; the sequence is MALPFQLGFQDATS. The helical transmembrane segment at 15-45 threads the bilayer; sequence PIMEELLHFHDHTLMIVFMISSLVLYLISSM. At 46 to 59 the chain is on the mitochondrial matrix side; it reads LTTRLTHTSTMDAQ. Residues 60 to 87 form a helical membrane-spanning segment; sequence EVETIWTILPAIILITIALPSLRILYMM. At 88–227 the chain is on the mitochondrial intermembrane side; the sequence is DEINNPSMTI…CFEKWSTSML (140 aa). Residues His161, Cys196, Glu198, Cys200, His204, and Met207 each coordinate Cu cation. Mg(2+) is bound at residue Glu198.

Belongs to the cytochrome c oxidase subunit 2 family. Component of the cytochrome c oxidase (complex IV, CIV), a multisubunit enzyme composed of 14 subunits. The complex is composed of a catalytic core of 3 subunits MT-CO1, MT-CO2 and MT-CO3, encoded in the mitochondrial DNA, and 11 supernumerary subunits COX4I, COX5A, COX5B, COX6A, COX6B, COX6C, COX7A, COX7B, COX7C, COX8 and NDUFA4, which are encoded in the nuclear genome. The complex exists as a monomer or a dimer and forms supercomplexes (SCs) in the inner mitochondrial membrane with NADH-ubiquinone oxidoreductase (complex I, CI) and ubiquinol-cytochrome c oxidoreductase (cytochrome b-c1 complex, complex III, CIII), resulting in different assemblies (supercomplex SCI(1)III(2)IV(1) and megacomplex MCI(2)III(2)IV(2)). Found in a complex with TMEM177, COA6, COX18, COX20, SCO1 and SCO2. Interacts with TMEM177 in a COX20-dependent manner. Interacts with COX20. Interacts with COX16. Cu cation is required as a cofactor.

Its subcellular location is the mitochondrion inner membrane. The enzyme catalyses 4 Fe(II)-[cytochrome c] + O2 + 8 H(+)(in) = 4 Fe(III)-[cytochrome c] + 2 H2O + 4 H(+)(out). Its function is as follows. Component of the cytochrome c oxidase, the last enzyme in the mitochondrial electron transport chain which drives oxidative phosphorylation. The respiratory chain contains 3 multisubunit complexes succinate dehydrogenase (complex II, CII), ubiquinol-cytochrome c oxidoreductase (cytochrome b-c1 complex, complex III, CIII) and cytochrome c oxidase (complex IV, CIV), that cooperate to transfer electrons derived from NADH and succinate to molecular oxygen, creating an electrochemical gradient over the inner membrane that drives transmembrane transport and the ATP synthase. Cytochrome c oxidase is the component of the respiratory chain that catalyzes the reduction of oxygen to water. Electrons originating from reduced cytochrome c in the intermembrane space (IMS) are transferred via the dinuclear copper A center (CU(A)) of subunit 2 and heme A of subunit 1 to the active site in subunit 1, a binuclear center (BNC) formed by heme A3 and copper B (CU(B)). The BNC reduces molecular oxygen to 2 water molecules using 4 electrons from cytochrome c in the IMS and 4 protons from the mitochondrial matrix. The sequence is that of Cytochrome c oxidase subunit 2 (MT-CO2) from Phyllostomus hastatus (Greater spear-nosed bat).